The sequence spans 244 residues: Orotidine 5'-phosphate decarboxylase (244 aa).

Residues Asp10, Lys32, 59–68, Thr122, Arg184, Gln193, Gly213, and Arg214 each bind substrate; that span reads DLKLHDIPNT. The active-site Proton donor is Lys61.

The protein belongs to the OMP decarboxylase family. Type 1 subfamily. As to quaternary structure, homodimer.

It carries out the reaction orotidine 5'-phosphate + H(+) = UMP + CO2. The protein operates within pyrimidine metabolism; UMP biosynthesis via de novo pathway; UMP from orotate: step 2/2. Catalyzes the decarboxylation of orotidine 5'-monophosphate (OMP) to uridine 5'-monophosphate (UMP). The sequence is that of Orotidine 5'-phosphate decarboxylase from Geobacillus kaustophilus (strain HTA426).